Reading from the N-terminus, the 480-residue chain is Aspartyl/glutamyl-tRNA(Asn/Gln) amidotransferase subunit B (480 aa).

It belongs to the GatB/GatE family. GatB subfamily. In terms of assembly, heterotrimer of A, B and C subunits.

It catalyses the reaction L-glutamyl-tRNA(Gln) + L-glutamine + ATP + H2O = L-glutaminyl-tRNA(Gln) + L-glutamate + ADP + phosphate + H(+). It carries out the reaction L-aspartyl-tRNA(Asn) + L-glutamine + ATP + H2O = L-asparaginyl-tRNA(Asn) + L-glutamate + ADP + phosphate + 2 H(+). Allows the formation of correctly charged Asn-tRNA(Asn) or Gln-tRNA(Gln) through the transamidation of misacylated Asp-tRNA(Asn) or Glu-tRNA(Gln) in organisms which lack either or both of asparaginyl-tRNA or glutaminyl-tRNA synthetases. The reaction takes place in the presence of glutamine and ATP through an activated phospho-Asp-tRNA(Asn) or phospho-Glu-tRNA(Gln). The protein is Aspartyl/glutamyl-tRNA(Asn/Gln) amidotransferase subunit B of Streptococcus pneumoniae serotype 19F (strain G54).